The chain runs to 486 residues: N-succinylglutamate 5-semialdehyde dehydrogenase (486 aa).

220-225 contacts NAD(+); it reads GSSRTG. Catalysis depends on residues Glu243 and Cys277.

The protein belongs to the aldehyde dehydrogenase family. AstD subfamily.

It catalyses the reaction N-succinyl-L-glutamate 5-semialdehyde + NAD(+) + H2O = N-succinyl-L-glutamate + NADH + 2 H(+). The protein operates within amino-acid degradation; L-arginine degradation via AST pathway; L-glutamate and succinate from L-arginine: step 4/5. Functionally, catalyzes the NAD-dependent reduction of succinylglutamate semialdehyde into succinylglutamate. The protein is N-succinylglutamate 5-semialdehyde dehydrogenase of Shewanella frigidimarina (strain NCIMB 400).